A 119-amino-acid polypeptide reads, in one-letter code: Virulence protein VsdF (119 aa).

In terms of biological role, expressed but non-essential protein, involved in the virulence of Salmonellas. This Salmonella dublin protein is Virulence protein VsdF (vsdF).